The chain runs to 383 residues: MDPTQISHLALDIGGTLIKLVYFSANGDYSEESRNGCSVVKGRLCFAKFETRKIDDCLEFIRFNILHHSGVQQPNGEGHDKLYVKATGGGAFKFADLFKEKLGILFDKEDEMCSLVGGVNFLLKTVPREAFTYLDGQKKFVEIDHNDLYPYLLVNIGSGVSMIKVDGDGKYERISGTSLGGGTFLGLGKLLTKCKSFDELLELSHHGNNRVIDMLVGDIYGGTDYSKIGLSSTAIASSFGKAISDGKELEDYQPEDVARSLLRMISNNIGQIAYLNALRFGLKRIFFGGFFIRGLEYTMDTISVAVHFWSRGEAKAMFLRHEGFLGALGAFTSYNDQSHNDLKPHHHTVQRAILNCSGHNFRHIPVTSNLNESETIECSINLV.

This sequence belongs to the type II pantothenate kinase family. In terms of tissue distribution, highly expressed in leaves and developing seeds. Expressed in roots, stems and flowers.

The catalysed reaction is (R)-pantothenate + ATP = (R)-4'-phosphopantothenate + ADP + H(+). Its pathway is cofactor biosynthesis; coenzyme A biosynthesis; CoA from (R)-pantothenate: step 1/5. Regulated by feedback inhibition by malonyl-CoA. Its function is as follows. Catalyzes the phosphorylation of pantothenate the first step in CoA biosynthesis. May play a role in the physiological regulation of the intracellular CoA concentration. Functionally redudant with PANK2. In Arabidopsis thaliana (Mouse-ear cress), this protein is Pantothenate kinase 1 (PANK1).